The following is a 166-amino-acid chain: Regulatory protein RecX (166 aa).

This sequence belongs to the RecX family.

It is found in the cytoplasm. Modulates RecA activity. The sequence is that of Regulatory protein RecX from Shigella boydii serotype 18 (strain CDC 3083-94 / BS512).